The sequence spans 303 residues: MSRPYQPQRYSLISELHKNFHYVDVSVIQSEFKNVILKTVVPKLSQPATHLEKGDFLLKICQLLMIHREEEQQILNKVKSNIIYFLNELWSAEYGKVQEQVKNILCEVKLDKTDSELSTYLAQEIPKLTVLKYPTHFKVCEETIPNGRWCLHNLLGIEQYYKDFSNIVLHDPETSLGSVQAYSRLSKLLFWCDSFMNKIYPCNAFNSSINQVVLWSTMFHFYSVAHCNDCISESISFTEALLKQEVSAFYEWCLEEEYEEDRMAKFMKFSADQITILSTHTDLQNLAEYIYSYKKCLINRRFE.

This sequence belongs to the herpesviridae BBRF1 family.

This is an uncharacterized protein from Saimiriine herpesvirus 2 (strain 11) (SaHV-2).